The sequence spans 457 residues: Vasoactive intestinal polypeptide receptor (457 aa).

Residues 1–19 (MGLVEVVWWWRWRFGGGGG) form the signal peptide. Topologically, residues 20 to 141 (GLVVEVEVWW…KEQTAFYGTV (122 aa)) are extracellular. Intrachain disulfides connect C51/C73, C64/C105, and C87/C122. N-linked (GlcNAc...) asparagine glycosylation is found at N59, N70, N100, and N104. A helical transmembrane segment spans residues 142–166 (KTGYTIGHTLSLIALTAAMIILCLF). Over 167–173 (RKLHCTR) the chain is Cytoplasmic. A helical membrane pass occupies residues 174–193 (NYIHMHLFMSFIMRAIAVFI). Topologically, residues 194–215 (KDVTLFESGEPEHCFVSSVGCK) are extracellular. A disulfide bridge links C214 with C284. Residues 216-239 (AMMVFFQYCVMANFFWLLVEGLYL) form a helical membrane-spanning segment. Residues 240–253 (HTLLVISFFSERKY) are Cytoplasmic-facing. Residues 254 to 275 (FWWYILIGWGAPSVFITAWTVV) traverse the membrane as a helical segment. Over 276–292 (RIYFFNVGCWEEIIESP) the chain is Extracellular. The chain crosses the membrane as a helical span at residues 293-316 (IWWIIKTPILVSILVNFILFICII). Residues 317–341 (RILVQKLHSPDVGHNETSQYSRLAK) are Cytoplasmic-facing. A helical membrane pass occupies residues 342–361 (STLLLIPLFGIHYIMFAFFP). Residues 362-373 (DNFKAQVKLVFE) are Extracellular-facing. The chain crosses the membrane as a helical span at residues 374 to 393 (LVVGSFQGFVVAVLYCFLNG). Over 394-457 (EVQAELKRKW…SSFQAEFSLV (64 aa)) the chain is Cytoplasmic.

Belongs to the G-protein coupled receptor 2 family. Expressed in pituitary, hypothalamus, small intestine and ovarian follicles.

It is found in the cell membrane. In terms of biological role, this is a receptor for VIP. The activity of this receptor is mediated by G proteins which activate adenylyl cyclase. This is Vasoactive intestinal polypeptide receptor (VIPR1) from Meleagris gallopavo (Wild turkey).